Reading from the N-terminus, the 92-residue chain is Small ribosomal subunit protein uS19 (92 aa).

Belongs to the universal ribosomal protein uS19 family.

In terms of biological role, protein S19 forms a complex with S13 that binds strongly to the 16S ribosomal RNA. In Bacillus cereus (strain B4264), this protein is Small ribosomal subunit protein uS19.